The sequence spans 234 residues: tRNA (guanine-N(1)-)-methyltransferase (234 aa).

S-adenosyl-L-methionine contacts are provided by residues glycine 115 and 135-140; that span reads VGDYIL.

Belongs to the RNA methyltransferase TrmD family. In terms of assembly, homodimer.

Its subcellular location is the cytoplasm. The catalysed reaction is guanosine(37) in tRNA + S-adenosyl-L-methionine = N(1)-methylguanosine(37) in tRNA + S-adenosyl-L-homocysteine + H(+). Specifically methylates guanosine-37 in various tRNAs. The protein is tRNA (guanine-N(1)-)-methyltransferase of Rickettsia peacockii (strain Rustic).